A 639-amino-acid polypeptide reads, in one-letter code: Chaperone protein DnaK (639 aa).

Residue T197 is modified to Phosphothreonine; by autocatalysis. The segment at S600 to K639 is disordered. The span at N613–G624 shows a compositional bias: low complexity. Residues N629–K639 are compositionally biased toward acidic residues.

This sequence belongs to the heat shock protein 70 family.

In terms of biological role, acts as a chaperone. This Bacteroides fragilis (strain ATCC 25285 / DSM 2151 / CCUG 4856 / JCM 11019 / LMG 10263 / NCTC 9343 / Onslow / VPI 2553 / EN-2) protein is Chaperone protein DnaK.